The sequence spans 141 residues: Phage-like element PBSX protein XkdS (141 aa).

It to B.subtilis YqbS.

This is Phage-like element PBSX protein XkdS (xkdS) from Bacillus subtilis (strain 168).